The chain runs to 443 residues: Probable lipase C16A3.12c (443 aa).

Topologically, residues 1–16 (MSGFNKNQIYWGDYVG) are cytoplasmic. Residues 17–37 (VIAAFVGVYTELVARIFIYMI) traverse the membrane as a helical; Signal-anchor for type II membrane protein segment. Topologically, residues 38–443 (PERVREWFRV…KHFVKQNGFH (406 aa)) are lumenal. One can recognise an AB hydrolase-1 domain in the interval 116-410 (VVYCHHGLMT…HYEHLDFLWG (295 aa)). Residues Asn134 and Asn177 are each glycosylated (N-linked (GlcNAc...) asparagine). Ser210 functions as the Nucleophile in the catalytic mechanism. N-linked (GlcNAc...) asparagine glycans are attached at residues Asn304 and Asn335. Active-site charge relay system residues include Asp378 and His404.

It belongs to the AB hydrolase superfamily. Lipase family.

Its subcellular location is the cytoplasm. The protein resides in the vacuole. The protein localises to the membrane. Its function is as follows. Probable lipase. The protein is Probable lipase C16A3.12c of Schizosaccharomyces pombe (strain 972 / ATCC 24843) (Fission yeast).